An 856-amino-acid chain; its full sequence is Translation initiation factor IF-2 (856 aa).

Disordered regions lie at residues 1–248 and 254–273; these read MSDN…ARAR and KRAR…QQKQ. Residues 22-38 show a composition bias toward polar residues; that stretch reads ETGQVKQSFSHGRSNTV. Residues 83 to 93 show a composition bias toward pro residues; that stretch reads APRPAPAPIPT. Over residues 100–150 the composition is skewed to basic and acidic residues; the sequence is LERREQQERLLREAEEARMAALEETRRREERAKAEATEEERRRAEENRRAE. Over residues 156 to 196 the composition is skewed to low complexity; sequence AAAAAAAAATAEAETAAAAPREEAPAAAGTAEEAPRTSSST. Over residues 197–209 the composition is skewed to pro residues; that stretch reads MPPPRRFTPVPSP. Residues 210–229 are compositionally biased toward basic and acidic residues; sequence KRPEPPRPQQRDRKGDDRRQ. In terms of domain architecture, tr-type G spans 356–526; that stretch reads PRPPVVTIMG…ELQAELLELK (171 aa). The segment at 365–372 is G1; the sequence is GHVDHGKT. 365–372 provides a ligand contact to GTP; it reads GHVDHGKT. The tract at residues 390–394 is G2; sequence GITQH. Residues 412–415 form a G3 region; the sequence is DTPG. GTP is bound by residues 412-416 and 466-469; these read DTPGH and NKMD. A G4 region spans residues 466 to 469; that stretch reads NKMD. The G5 stretch occupies residues 502 to 504; sequence SAL.

It belongs to the TRAFAC class translation factor GTPase superfamily. Classic translation factor GTPase family. IF-2 subfamily.

It localises to the cytoplasm. In terms of biological role, one of the essential components for the initiation of protein synthesis. Protects formylmethionyl-tRNA from spontaneous hydrolysis and promotes its binding to the 30S ribosomal subunits. Also involved in the hydrolysis of GTP during the formation of the 70S ribosomal complex. The polypeptide is Translation initiation factor IF-2 (Rhizorhabdus wittichii (strain DSM 6014 / CCUG 31198 / JCM 15750 / NBRC 105917 / EY 4224 / RW1) (Sphingomonas wittichii)).